Here is a 212-residue protein sequence, read N- to C-terminus: uncharacterized protein (212 aa).

Positions 42–101 (GITGPKATKSPSRRTTRSPSPSRRTTRSSPSRRTTRSSPSRRTTRSPSPSGRRKQGGPAV) are disordered. The span at 58–91 (RSPSPSRRTTRSSPSRRTTRSSPSRRTTRSPSPS) shows a compositional bias: low complexity.

Belongs to the IIV-6 378R family.

This is an uncharacterized protein from Invertebrate iridescent virus 3 (IIV-3).